Here is a 118-residue protein sequence, read N- to C-terminus: SPbeta prophage-derived uncharacterized protein YomS (118 aa).

The sequence is that of SPbeta prophage-derived uncharacterized protein YomS (yomS) from Bacillus subtilis (strain 168).